A 228-amino-acid polypeptide reads, in one-letter code: Ribonuclease 3 (228 aa).

Residues Leu-7–Gly-132 form the RNase III domain. Glu-45 is a Mg(2+) binding site. Asp-49 is a catalytic residue. Asp-118 and Glu-121 together coordinate Mg(2+). Glu-121 is an active-site residue. In terms of domain architecture, DRBM spans Asp-157–Arg-226.

This sequence belongs to the ribonuclease III family. Homodimer. The cofactor is Mg(2+).

The protein resides in the cytoplasm. The catalysed reaction is Endonucleolytic cleavage to 5'-phosphomonoester.. Functionally, digests double-stranded RNA. Involved in the processing of ribosomal RNA precursors and of some mRNAs. Complements an E.coli disruption mutant, but the E.coli enzyme does not cleave R.capsulatus rRNA precursor, showing substrate recognition is different. Probably also processes some mRNAs, and tRNAs when they are encoded in the rRNA operon. Probably processes pre-crRNA and tracrRNA of type II CRISPR loci if present in the organism. This is Ribonuclease 3 (rnc) from Rhodobacter capsulatus (Rhodopseudomonas capsulata).